The following is a 114-amino-acid chain: Late cornified envelope protein 1D (114 aa).

The span at 1 to 10 shows a compositional bias: low complexity; the sequence is MSCQQSQQQC. 2 disordered regions span residues 1 to 21 and 75 to 114; these read MSCQ…PKCT and HHRR…GGCC. Residues 75–86 show a composition bias toward basic residues; it reads HHRRHRSHRRRP. Low complexity predominate over residues 88–99; the sequence is SSDCCSQPSGGS.

The protein belongs to the LCE family. As to quaternary structure, interacts with CYSRT1. As to expression, skin-specific. Expression was readily detected in adult trunk skin, adult arm skin, fetal skin, penal skin, vulva, esophagus and tongue. Not expressed in the cervix, rectum, lung, colon, or placenta.

Precursors of the cornified envelope of the stratum corneum. The chain is Late cornified envelope protein 1D (LCE1D) from Homo sapiens (Human).